A 379-amino-acid polypeptide reads, in one-letter code: Chaperone protein DnaJ (379 aa).

Residues 7-72 (DYYEVLGVDK…KKRSMYDQFG (66 aa)) enclose the J domain. Residues 147 to 225 (GKKAELSYTR…CGGNGLERKK (79 aa)) form a CR-type zinc finger. Zn(2+)-binding residues include Cys-160, Cys-163, Cys-177, Cys-180, Cys-199, Cys-202, Cys-213, and Cys-216. CXXCXGXG motif repeat units follow at residues 160-167 (CSECHGTG), 177-184 (CPDCKGTG), 199-206 (CPTCGGEG), and 213-220 (CKKCGGNG).

Belongs to the DnaJ family. As to quaternary structure, homodimer. It depends on Zn(2+) as a cofactor.

It is found in the cytoplasm. Its function is as follows. Participates actively in the response to hyperosmotic and heat shock by preventing the aggregation of stress-denatured proteins and by disaggregating proteins, also in an autonomous, DnaK-independent fashion. Unfolded proteins bind initially to DnaJ; upon interaction with the DnaJ-bound protein, DnaK hydrolyzes its bound ATP, resulting in the formation of a stable complex. GrpE releases ADP from DnaK; ATP binding to DnaK triggers the release of the substrate protein, thus completing the reaction cycle. Several rounds of ATP-dependent interactions between DnaJ, DnaK and GrpE are required for fully efficient folding. Also involved, together with DnaK and GrpE, in the DNA replication of plasmids through activation of initiation proteins. The polypeptide is Chaperone protein DnaJ (Treponema denticola (strain ATCC 35405 / DSM 14222 / CIP 103919 / JCM 8153 / KCTC 15104)).